The chain runs to 41 residues: Hemoglobin subunit beta (41 aa).

Positions 1–41 (LGNVLVCVLAHHFGKEFTPQVQAAYQKVVAGVANALAHKYH) constitute a Globin domain. Lys-39 is modified (N6-acetyllysine).

This sequence belongs to the globin family. As to quaternary structure, heterotetramer of two alpha chains and two beta chains. In terms of tissue distribution, red blood cells.

Involved in oxygen transport from the lung to the various peripheral tissues. This chain is Hemoglobin subunit beta (HBB), found in Colobus guereza (Mantled guereza).